The chain runs to 619 residues: Coagulation factor X-activating enzyme heavy chain (619 aa).

Residues 1-20 (MMQVLLVTISLAVFPYQGSS) form the signal peptide. Positions 21-188 (IILESGNVND…SDKPIKKASQ (168 aa)) are excised as a propeptide. A Peptidase M12B domain is found at 199 to 393 (IFIELVIIVD…YKPKCIFNPP (195 aa)). Cysteines 215 and 251 form a disulfide. 2 N-linked (GlcNAc...) (complex) asparagine glycosylation sites follow: Asn-216 and Asn-257. 3 cysteine pairs are disulfide-bonded: Cys-308–Cys-388, Cys-348–Cys-372, and Cys-350–Cys-355. Residue His-333 participates in Zn(2+) binding. Residue Glu-334 is part of the active site. 2 residues coordinate Zn(2+): His-337 and His-343. 2 N-linked (GlcNAc...) (complex) asparagine glycosylation sites follow: Asn-351 and Asn-371. The region spanning 401–487 (PPVCGNEIWE…ECPRDQLQQN (87 aa)) is the Disintegrin domain. Ca(2+) is bound by residues Val-403, Asn-406, Ile-408, Glu-410, Glu-413, and Asp-416. 14 disulfide bridges follow: Cys-404/Cys-433, Cys-415/Cys-428, Cys-417/Cys-423, Cys-427/Cys-450, Cys-441/Cys-447, Cys-446/Cys-472, Cys-459/Cys-479, Cys-466/Cys-498, Cys-491/Cys-503, Cys-510/Cys-560, Cys-525/Cys-571, Cys-538/Cys-548, Cys-555/Cys-597, and Cys-591/Cys-603. Positions 465 to 467 (ECD) match the D/ECD-tripeptide motif. Ca(2+)-binding residues include Asp-467, Val-468, Glu-470, Asp-482, and Gln-483.

Belongs to the venom metalloproteinase (M12B) family. P-III subfamily. P-IIId sub-subfamily. In terms of assembly, heterotrimer; disulfide-linked. The heterotrimer consists of 1 heavy chain and 2 light chains (lectins): LC1 and LC2. Zn(2+) serves as cofactor. N-glycosylated; probably required for conformation. Removal of easily accessible sugars does not change its functional capacity, but removal of the core sugars with N-glycanase causes a virtually complete loss of enzyme activity, apparently as a result of major conformational changes in the molecule. Not O-glycosylated. Expressed by the venom gland.

Its subcellular location is the secreted. The enzyme catalyses Specifically activates several components of the blood clotting system, including coagulation factor X, coagulation factor IX and protein C by cleavage of Arg-|-Xaa bonds. Has no action on insulin B chain.. In terms of biological role, catalytic subunit of blood coagulation factor X-activating enzyme. Activates coagulation factor X (F10) by cleaving the Arg-Ile bond and is also able to activate coagulation factor IX (F9) and protein S (PROS1) by specific cleavage of Arg-Ile and Arg-Val bonds. The sequence is that of Coagulation factor X-activating enzyme heavy chain from Daboia siamensis (Eastern Russel's viper).